The chain runs to 305 residues: Putative F-box protein PP2-B8 (305 aa).

In terms of domain architecture, F-box spans 33 to 79 (VAELDDLPEECVSIIVSFTSPQDACVLASVSKTFASAVKSDIVWEKF).

This Arabidopsis thaliana (Mouse-ear cress) protein is Putative F-box protein PP2-B8 (PP2B8).